The chain runs to 340 residues: Protein-arginine kinase (340 aa).

Positions 21–242 (VVLSSRIRLA…EQIIMQERVA (222 aa)) constitute a Phosphagen kinase C-terminal domain. ATP is bound by residues 24–28 (SSRIR), His-79, Arg-113, 164–168 (RASVM), and 195–200 (RGIYGE).

This sequence belongs to the ATP:guanido phosphotransferase family.

The enzyme catalyses L-arginyl-[protein] + ATP = N(omega)-phospho-L-arginyl-[protein] + ADP + H(+). Catalyzes the specific phosphorylation of arginine residues in proteins. In Listeria monocytogenes serovar 1/2a (strain ATCC BAA-679 / EGD-e), this protein is Protein-arginine kinase.